Consider the following 466-residue polypeptide: Argininosuccinate lyase (466 aa).

The protein belongs to the lyase 1 family. Argininosuccinate lyase subfamily.

The protein resides in the cytoplasm. It carries out the reaction 2-(N(omega)-L-arginino)succinate = fumarate + L-arginine. The protein operates within amino-acid biosynthesis; L-arginine biosynthesis; L-arginine from L-ornithine and carbamoyl phosphate: step 3/3. This Campylobacter concisus (strain 13826) protein is Argininosuccinate lyase.